Here is a 237-residue protein sequence, read N- to C-terminus: DNA repair protein RecO (237 aa).

It belongs to the RecO family.

Functionally, involved in DNA repair and RecF pathway recombination. This Rickettsia rickettsii (strain Iowa) protein is DNA repair protein RecO.